A 101-amino-acid chain; its full sequence is NAD(P)H-quinone oxidoreductase subunit 4L, chloroplastic (101 aa).

Helical transmembrane passes span 2–22 (LLEH…YGLI), 32–52 (MCLE…SDFF), and 61–81 (IFSI…SAIV).

The protein belongs to the complex I subunit 4L family. As to quaternary structure, NDH is composed of at least 16 different subunits, 5 of which are encoded in the nucleus.

The protein localises to the plastid. Its subcellular location is the chloroplast thylakoid membrane. The enzyme catalyses a plastoquinone + NADH + (n+1) H(+)(in) = a plastoquinol + NAD(+) + n H(+)(out). It catalyses the reaction a plastoquinone + NADPH + (n+1) H(+)(in) = a plastoquinol + NADP(+) + n H(+)(out). NDH shuttles electrons from NAD(P)H:plastoquinone, via FMN and iron-sulfur (Fe-S) centers, to quinones in the photosynthetic chain and possibly in a chloroplast respiratory chain. The immediate electron acceptor for the enzyme in this species is believed to be plastoquinone. Couples the redox reaction to proton translocation, and thus conserves the redox energy in a proton gradient. In Carica papaya (Papaya), this protein is NAD(P)H-quinone oxidoreductase subunit 4L, chloroplastic.